The chain runs to 227 residues: Ubiquitin domain-containing protein 1 (227 aa).

The disordered stretch occupies residues 1–42; that stretch reads MGNCVGRQRRERPAAPGHPRKRAGRNEPLKKERLKWKSDYPM. A compositionally biased stretch (basic and acidic residues) spans 24-38; that stretch reads GRNEPLKKERLKWKS. The Ubiquitin-like domain occupies 149–224; the sequence is FPLKVRLSTG…IQVIINQPPP (76 aa).

As to quaternary structure, interacts with UBTD1.

Its function is as follows. May be involved in the regulation of cellular senescence through a positive feedback loop with TP53. Is a TP53 downstream target gene that increases the stability of TP53 protein by promoting the ubiquitination and degradation of MDM2. The sequence is that of Ubiquitin domain-containing protein 1 (Ubtd1) from Mus musculus (Mouse).